A 630-amino-acid polypeptide reads, in one-letter code: Very-long-chain aldehyde decarbonylase GL1-7 (630 aa).

Transmembrane regions (helical) follow at residues 93–113, 126–146, 185–205, and 325–345; these read LYLD…YAII, GALI…YWFH, FLLF…SVLA, and VWYM…AWIY. Residues 133–272 enclose the Fatty acid hydroxylase domain; sequence LHMGPVEFLY…MPFYDYIYNT (140 aa).

This sequence belongs to the sterol desaturase family. Homodimer. As to expression, expressed in panicles at low levels.

The protein localises to the endoplasmic reticulum membrane. The enzyme catalyses a long-chain fatty aldehyde + 2 NADPH + O2 + H(+) = a long-chain alkane + formate + 2 NADP(+) + H2O. Its function is as follows. Aldehyde decarbonylase involved in the conversion of aldehydes to alkanes. Core component of a very-long-chain alkane synthesis complex. In Oryza sativa subsp. japonica (Rice), this protein is Very-long-chain aldehyde decarbonylase GL1-7.